We begin with the raw amino-acid sequence, 428 residues long: C4-dicarboxylate transport protein (428 aa).

Helical transmembrane passes span S8–P28, L44–M64, V76–V96, I142–F162, V184–M204, L222–A242, I326–V346, and I352–I372.

It belongs to the dicarboxylate/amino acid:cation symporter (DAACS) (TC 2.A.23) family.

The protein localises to the cell inner membrane. Its function is as follows. Responsible for the transport of dicarboxylates such as succinate, fumarate, and malate from the periplasm across the membrane. The sequence is that of C4-dicarboxylate transport protein from Escherichia coli O127:H6 (strain E2348/69 / EPEC).